Consider the following 386-residue polypeptide: Benzoyl-CoA reductase subunit C (386 aa).

The protein belongs to the FldB/FldC dehydratase alpha/beta subunit family. As to quaternary structure, heterotetramer composed of A, B, C, and D subunits. Iron-sulfur cluster is required as a cofactor. It depends on an oxidized flavin as a cofactor.

It carries out the reaction cyclohexa-1,5-diene-1-carbonyl-CoA + oxidized 2[4Fe-4S]-[ferredoxin] + 2 ADP + 2 phosphate = reduced 2[4Fe-4S]-[ferredoxin] + benzoyl-CoA + 2 ATP + 2 H2O. It catalyses the reaction 3-hydroxybenzoyl-CoA + AH2 + 2 ATP + 2 H2O = 3-hydroxycyclohexa-1,5-diene-1-carbonyl-CoA + A + 2 ADP + 2 phosphate + 2 H(+). Catalyzes the anaerobic reduction of benzoyl-CoA and 3-hydroxybenzoyl-CoA to form cyclohexa-1,5-diene-1-carbonyl-CoA and 3-hydroxycyclohexa-1,5-diene-1-carbonyl-CoA, respectively. The enzyme also reduces other benzoyl-CoA analogs with small substituents at the aromatic ring. The polypeptide is Benzoyl-CoA reductase subunit C (bcrC) (Thauera aromatica).